Reading from the N-terminus, the 186-residue chain is Shikimate kinase (186 aa).

15-20 lines the ATP pocket; that stretch reads GAGKTT. Mg(2+) is bound at residue Thr-19. Substrate is bound by residues Asp-37, Arg-61, and Gly-83. Position 121 (Arg-121) interacts with ATP. Arg-140 contributes to the substrate binding site.

The protein belongs to the shikimate kinase family. As to quaternary structure, monomer. Mg(2+) is required as a cofactor.

The protein localises to the cytoplasm. It carries out the reaction shikimate + ATP = 3-phosphoshikimate + ADP + H(+). The protein operates within metabolic intermediate biosynthesis; chorismate biosynthesis; chorismate from D-erythrose 4-phosphate and phosphoenolpyruvate: step 5/7. In terms of biological role, catalyzes the specific phosphorylation of the 3-hydroxyl group of shikimic acid using ATP as a cosubstrate. This chain is Shikimate kinase, found in Psychrobacter arcticus (strain DSM 17307 / VKM B-2377 / 273-4).